The primary structure comprises 130 residues: MSAKTDEILESLKTLSLLEASELVKQIEEAFGVSAAASAGAVVMAAPGAAAGGGEAAEEKTEFDVILESFDAAAKIKVLKAVREATGLGLADAKGLVEKAPTPVKEGVAKAAAEDMKKAIEEAGGKVTLK.

It belongs to the bacterial ribosomal protein bL12 family. Homodimer. Part of the ribosomal stalk of the 50S ribosomal subunit. Forms a multimeric L10(L12)X complex, where L10 forms an elongated spine to which 2 to 4 L12 dimers bind in a sequential fashion. Binds GTP-bound translation factors.

Its function is as follows. Forms part of the ribosomal stalk which helps the ribosome interact with GTP-bound translation factors. Is thus essential for accurate translation. The protein is Large ribosomal subunit protein bL12 of Synechococcus sp. (strain RCC307).